A 417-amino-acid chain; its full sequence is UDP-N-acetylglucosamine 1-carboxyvinyltransferase (417 aa).

22–23 (KN) serves as a coordination point for phosphoenolpyruvate. Arg92 provides a ligand contact to UDP-N-acetyl-alpha-D-glucosamine. The active-site Proton donor is Cys116. Cys116 bears the 2-(S-cysteinyl)pyruvic acid O-phosphothioketal mark. The UDP-N-acetyl-alpha-D-glucosamine site is built by Asp304 and Ile326.

This sequence belongs to the EPSP synthase family. MurA subfamily.

The protein localises to the cytoplasm. The enzyme catalyses phosphoenolpyruvate + UDP-N-acetyl-alpha-D-glucosamine = UDP-N-acetyl-3-O-(1-carboxyvinyl)-alpha-D-glucosamine + phosphate. It participates in cell wall biogenesis; peptidoglycan biosynthesis. Cell wall formation. Adds enolpyruvyl to UDP-N-acetylglucosamine. The polypeptide is UDP-N-acetylglucosamine 1-carboxyvinyltransferase (Desulfosudis oleivorans (strain DSM 6200 / JCM 39069 / Hxd3) (Desulfococcus oleovorans)).